A 205-amino-acid polypeptide reads, in one-letter code: Outer-membrane lipoprotein LolB (205 aa).

A signal peptide spans 1–17 (MFLRHFIVFSFIALLAG). Cys-18 carries N-palmitoyl cysteine lipidation. Cys-18 carries the S-diacylglycerol cysteine lipid modification.

The protein belongs to the LolB family. Monomer.

Its subcellular location is the cell outer membrane. In terms of biological role, plays a critical role in the incorporation of lipoproteins in the outer membrane after they are released by the LolA protein. This Pseudomonas fluorescens (strain ATCC BAA-477 / NRRL B-23932 / Pf-5) protein is Outer-membrane lipoprotein LolB.